The chain runs to 660 residues: UvrABC system protein B (660 aa).

Residues Glu-25–Asn-183 form the Helicase ATP-binding domain. Gly-38–Thr-45 is a binding site for ATP. The Beta-hairpin motif lies at Tyr-91–Val-114. The Helicase C-terminal domain maps to Gln-431–Leu-593. The UVR domain maps to Ala-622–Thr-657.

The protein belongs to the UvrB family. In terms of assembly, forms a heterotetramer with UvrA during the search for lesions. Interacts with UvrC in an incision complex.

Its subcellular location is the cytoplasm. Its function is as follows. The UvrABC repair system catalyzes the recognition and processing of DNA lesions. A damage recognition complex composed of 2 UvrA and 2 UvrB subunits scans DNA for abnormalities. Upon binding of the UvrA(2)B(2) complex to a putative damaged site, the DNA wraps around one UvrB monomer. DNA wrap is dependent on ATP binding by UvrB and probably causes local melting of the DNA helix, facilitating insertion of UvrB beta-hairpin between the DNA strands. Then UvrB probes one DNA strand for the presence of a lesion. If a lesion is found the UvrA subunits dissociate and the UvrB-DNA preincision complex is formed. This complex is subsequently bound by UvrC and the second UvrB is released. If no lesion is found, the DNA wraps around the other UvrB subunit that will check the other stand for damage. This chain is UvrABC system protein B, found in Methanococcoides burtonii (strain DSM 6242 / NBRC 107633 / OCM 468 / ACE-M).